We begin with the raw amino-acid sequence, 297 residues long: Cell division protein ZipA (297 aa).

A topological domain (periplasmic) is located at residue Met1. Residues 2-22 (EIGLREWLILIGIIVIAGILF) form a helical membrane-spanning segment. Residues 23 to 297 (DGWRRMRGGK…FERRALTQKR (275 aa)) are Cytoplasmic-facing. The interval 48–150 (DEEGGSAEVL…GAAPASSSVK (103 aa)) is disordered. A compositionally biased stretch (basic and acidic residues) spans 83 to 92 (ARDREREPKP). Over residues 124–133 (LFADSDDDFA) the composition is skewed to acidic residues. Polar residues predominate over residues 136 to 149 (NNRSSGAAPASSSV).

This sequence belongs to the ZipA family. In terms of assembly, interacts with FtsZ via their C-terminal domains.

It localises to the cell inner membrane. Functionally, essential cell division protein that stabilizes the FtsZ protofilaments by cross-linking them and that serves as a cytoplasmic membrane anchor for the Z ring. Also required for the recruitment to the septal ring of downstream cell division proteins. This is Cell division protein ZipA from Pseudomonas putida (strain ATCC 700007 / DSM 6899 / JCM 31910 / BCRC 17059 / LMG 24140 / F1).